A 201-amino-acid chain; its full sequence is MGNPQTTIAYSLHHPRASLTSALPDAAQVVHVFESGTRAVLTRGRARQDRLPRGGVVIQHTPIGLLVIIDCRAEFCAYRFIGRASTQRLERWWDAHMYAYPFDSWVSSSHGESVRSATAGILTVVWTPDTIYITATIYGTAPEAARGCDNAPLDVRPTTPPAPVSPTAGEFPANTTDLLVEVLREIQISPTLDDADPTPGT.

It belongs to the alphaherpesvirinae HHV-1 UL4 family.

It is found in the host nucleus. The protein is Nuclear protein UL4 of Human herpesvirus 2 (strain HG52) (HHV-2).